A 565-amino-acid chain; its full sequence is Mediator of RNA polymerase II transcription subunit 17 (565 aa).

Residues 138-152 show a composition bias toward polar residues; sequence TSLNSDRLGQDSNDN. Residues 138–160 form a disordered region; it reads TSLNSDRLGQDSNDNQESKATDS.

It belongs to the Mediator complex subunit 17 family. Component of the Mediator complex.

Its subcellular location is the nucleus. Its function is as follows. Component of the Mediator complex, a coactivator involved in the regulated transcription of nearly all RNA polymerase II-dependent genes. Mediator functions as a bridge to convey information from gene-specific regulatory proteins to the basal RNA polymerase II transcription machinery. Mediator is recruited to promoters by direct interactions with regulatory proteins and serves as a scaffold for the assembly of a functional preinitiation complex with RNA polymerase II and the general transcription factors. In Candida albicans (strain SC5314 / ATCC MYA-2876) (Yeast), this protein is Mediator of RNA polymerase II transcription subunit 17 (SRB4).